Here is a 561-residue protein sequence, read N- to C-terminus: Arginine--tRNA ligase (561 aa).

The 'HIGH' region signature appears at Ala-129 to His-139.

This sequence belongs to the class-I aminoacyl-tRNA synthetase family. In terms of assembly, monomer.

It localises to the cytoplasm. The enzyme catalyses tRNA(Arg) + L-arginine + ATP = L-arginyl-tRNA(Arg) + AMP + diphosphate. This Polaromonas sp. (strain JS666 / ATCC BAA-500) protein is Arginine--tRNA ligase.